The sequence spans 233 residues: Opacity protein opA67 (233 aa).

A signal peptide is located at residue alanine 1.

The protein belongs to the opacity porin family.

It is found in the cell outer membrane. Its function is as follows. Implicated in a number of adherence functions. OPA proteins are implicated in pathogenesis and are subject to phase variation. This is Opacity protein opA67 from Neisseria gonorrhoeae.